Consider the following 511-residue polypeptide: Probable G-protein coupled receptor 152 (511 aa).

The segment at 1 to 20 (MDTAVEANLGAAGHGPRTEL) is disordered. Residues 1 to 33 (MDTAVEANLGAAGHGPRTELSDEDYYPQGSWDT) are Extracellular-facing. Residues 34 to 54 (VFLVALLLLGLPANGLMAWLA) traverse the membrane as a helical segment. Over 55 to 65 (GSQARHGAGTR) the chain is Cytoplasmic. Residues 66–86 (LALLLLSLALSDFLFLAAATF) form a helical membrane-spanning segment. At 87 to 105 (QILEIQHGGHWPLGTAACR) the chain is on the extracellular side. A disulfide bridge links Cys-104 with Cys-182. A helical transmembrane segment spans residues 106–126 (FYYFLWGVSYSSGLFLLTALS). Over 127 to 148 (LDRCLLALCPRWYPGHRPARLP) the chain is Cytoplasmic. Residues 149 to 169 (LWVCAGVWVLATLFSVPWLVF) form a helical membrane-spanning segment. Topologically, residues 170-194 (PEAAVWWYDLVICLDFWDTEELPLR) are extracellular. A helical transmembrane segment spans residues 195-215 (MLEILGGFLPFLLLLVCHVLT). The Cytoplasmic segment spans residues 216 to 258 (QATACRTCCGHQPRRMACHGFARVAKTILSAYVVLRLPYQLAQ). Residues 259–279 (LLYLAFLWDVYPGYLLWEALV) form a helical membrane-spanning segment. The Extracellular portion of the chain corresponds to 280–282 (YSD). The chain crosses the membrane as a helical span at residues 283–303 (YLILLNSCLSPFLCLAASADL). Over 304-511 (RALLRTVLSS…PEEAPSAGPT (208 aa)) the chain is Cytoplasmic. Disordered regions lie at residues 328-349 (PAEP…DSVV), 361-386 (SDSV…PTVG), and 407-511 (PQLD…AGPT). Polar residues-rich tracts occupy residues 335–345 (PGPTSEGQSRL) and 369–386 (VSPS…PTVG). Residues 419-433 (PSAQPQSKSVVQPQV) are compositionally biased toward low complexity. Polar residues-rich tracts occupy residues 435 to 453 (PLTQ…NTET) and 462 to 473 (SASNPGEENSSG).

The protein belongs to the G-protein coupled receptor 1 family.

The protein resides in the cell membrane. Its function is as follows. Orphan receptor. This is Probable G-protein coupled receptor 152 (Gpr152) from Mus musculus (Mouse).